A 264-amino-acid chain; its full sequence is Elongation factor Ts (264 aa).

The segment at 76–79 is involved in Mg(2+) ion dislocation from EF-Tu; it reads TDFV.

The protein belongs to the EF-Ts family.

It is found in the cytoplasm. Associates with the EF-Tu.GDP complex and induces the exchange of GDP to GTP. It remains bound to the aminoacyl-tRNA.EF-Tu.GTP complex up to the GTP hydrolysis stage on the ribosome. The polypeptide is Elongation factor Ts (Deinococcus deserti (strain DSM 17065 / CIP 109153 / LMG 22923 / VCD115)).